The primary structure comprises 253 residues: Ubiquinone/menaquinone biosynthesis C-methyltransferase UbiE (253 aa).

S-adenosyl-L-methionine-binding positions include threonine 76, aspartate 97, 125-126 (NA), and serine 142.

Belongs to the class I-like SAM-binding methyltransferase superfamily. MenG/UbiE family.

It carries out the reaction a 2-demethylmenaquinol + S-adenosyl-L-methionine = a menaquinol + S-adenosyl-L-homocysteine + H(+). The enzyme catalyses a 2-methoxy-6-(all-trans-polyprenyl)benzene-1,4-diol + S-adenosyl-L-methionine = a 5-methoxy-2-methyl-3-(all-trans-polyprenyl)benzene-1,4-diol + S-adenosyl-L-homocysteine + H(+). The protein operates within quinol/quinone metabolism; menaquinone biosynthesis; menaquinol from 1,4-dihydroxy-2-naphthoate: step 2/2. It functions in the pathway cofactor biosynthesis; ubiquinone biosynthesis. Its function is as follows. Methyltransferase required for the conversion of demethylmenaquinol (DMKH2) to menaquinol (MKH2) and the conversion of 2-polyprenyl-6-methoxy-1,4-benzoquinol (DDMQH2) to 2-polyprenyl-3-methyl-6-methoxy-1,4-benzoquinol (DMQH2). This is Ubiquinone/menaquinone biosynthesis C-methyltransferase UbiE from Xanthomonas axonopodis pv. citri (strain 306).